Reading from the N-terminus, the 152-residue chain is Deoxyuridine 5'-triphosphate nucleotidohydrolase (152 aa).

Substrate is bound by residues 71–73 (RSG), Asn84, 88–90 (LID), and Met98.

This sequence belongs to the dUTPase family. As to quaternary structure, homotrimer. The cofactor is Mg(2+).

The catalysed reaction is dUTP + H2O = dUMP + diphosphate + H(+). The protein operates within pyrimidine metabolism; dUMP biosynthesis; dUMP from dCTP (dUTP route): step 2/2. This enzyme is involved in nucleotide metabolism: it produces dUMP, the immediate precursor of thymidine nucleotides and it decreases the intracellular concentration of dUTP so that uracil cannot be incorporated into DNA. This chain is Deoxyuridine 5'-triphosphate nucleotidohydrolase, found in Escherichia coli O157:H7.